An 87-amino-acid polypeptide reads, in one-letter code: Bombyxin B-10 (87 aa).

The signal sequence occupies residues 1 to 19; it reads MKTILIFLVVISLMYSGEA. Disulfide bonds link C27–C73, C39–C86, and C72–C77. Residues 46-64 constitute a propeptide, bombyxin B-10 C peptide; sequence SGAQYAPYFWTRQYLGSRG.

The protein belongs to the insulin family. In terms of assembly, heterodimer of a B chain and an A chain linked by two disulfide bonds.

The protein resides in the secreted. Functionally, brain peptide responsible for activation of prothoracic glands to produce ecdysone in insects. The sequence is that of Bombyxin B-10 (BBXB10) from Bombyx mori (Silk moth).